We begin with the raw amino-acid sequence, 390 residues long: GTPase Obg (390 aa).

The Obg domain maps to 1–159; sequence MKFVDEAVIR…RHLRLELLLL (159 aa). Residues 22 to 42 form a disordered region; the sequence is SFRTEKYVPRGGPDGGDGGDG. The span at 33 to 42 shows a compositional bias: gly residues; that stretch reads GPDGGDGGDG. The region spanning 160–333 is the OBG-type G domain; that stretch reads ADVGMLGLPN…LTYNLMTTIE (174 aa). GTP contacts are provided by residues 166–173, 191–195, 213–216, 283–286, and 314–316; these read GLPNAGKS, FTTLI, DIPG, NKVD, and SAL. Residues Ser173 and Thr193 each contribute to the Mg(2+) site.

The protein belongs to the TRAFAC class OBG-HflX-like GTPase superfamily. OBG GTPase family. As to quaternary structure, monomer. It depends on Mg(2+) as a cofactor.

Its subcellular location is the cytoplasm. Functionally, an essential GTPase which binds GTP, GDP and possibly (p)ppGpp with moderate affinity, with high nucleotide exchange rates and a fairly low GTP hydrolysis rate. Plays a role in control of the cell cycle, stress response, ribosome biogenesis and in those bacteria that undergo differentiation, in morphogenesis control. This Photobacterium profundum (strain SS9) protein is GTPase Obg.